We begin with the raw amino-acid sequence, 291 residues long: Pyridoxal 5'-phosphate synthase subunit PdxS (291 aa).

Aspartate 23 is a D-ribose 5-phosphate binding site. Residue lysine 80 is the Schiff-base intermediate with D-ribose 5-phosphate of the active site. Glycine 152 is a binding site for D-ribose 5-phosphate. A D-glyceraldehyde 3-phosphate-binding site is contributed by arginine 164. D-ribose 5-phosphate contacts are provided by residues glycine 213 and 234–235 (GS).

This sequence belongs to the PdxS/SNZ family. As to quaternary structure, in the presence of PdxT, forms a dodecamer of heterodimers.

The catalysed reaction is aldehydo-D-ribose 5-phosphate + D-glyceraldehyde 3-phosphate + L-glutamine = pyridoxal 5'-phosphate + L-glutamate + phosphate + 3 H2O + H(+). It functions in the pathway cofactor biosynthesis; pyridoxal 5'-phosphate biosynthesis. Its function is as follows. Catalyzes the formation of pyridoxal 5'-phosphate from ribose 5-phosphate (RBP), glyceraldehyde 3-phosphate (G3P) and ammonia. The ammonia is provided by the PdxT subunit. Can also use ribulose 5-phosphate and dihydroxyacetone phosphate as substrates, resulting from enzyme-catalyzed isomerization of RBP and G3P, respectively. This chain is Pyridoxal 5'-phosphate synthase subunit PdxS, found in Clostridium acetobutylicum (strain ATCC 824 / DSM 792 / JCM 1419 / IAM 19013 / LMG 5710 / NBRC 13948 / NRRL B-527 / VKM B-1787 / 2291 / W).